Consider the following 56-residue polypeptide: Ovomucoid (56 aa).

In terms of domain architecture, Kazal-like spans valine 6–cysteine 56. 3 disulfide bridges follow: cysteine 8-cysteine 38, cysteine 16-cysteine 35, and cysteine 24-cysteine 56. Asparagine 45 carries N-linked (GlcNAc...) asparagine glycosylation.

Its subcellular location is the secreted. The chain is Ovomucoid from Colinus virginianus (Northern bobwhite).